Consider the following 121-residue polypeptide: Small ribosomal subunit protein uS13 (121 aa).

The segment at 94–121 (GLPVRGQNTKNNARTRKGPRRTVANKKK) is disordered. Residues 106–121 (ARTRKGPRRTVANKKK) are compositionally biased toward basic residues.

It belongs to the universal ribosomal protein uS13 family. Part of the 30S ribosomal subunit. Forms a loose heterodimer with protein S19. Forms two bridges to the 50S subunit in the 70S ribosome.

Its function is as follows. Located at the top of the head of the 30S subunit, it contacts several helices of the 16S rRNA. In the 70S ribosome it contacts the 23S rRNA (bridge B1a) and protein L5 of the 50S subunit (bridge B1b), connecting the 2 subunits; these bridges are implicated in subunit movement. Contacts the tRNAs in the A and P-sites. The sequence is that of Small ribosomal subunit protein uS13 from Geobacillus kaustophilus (strain HTA426).